Consider the following 600-residue polypeptide: Methylenetetrahydrofolate reductase 2 (600 aa).

The active-site Proton donor/acceptor is Glu22. NAD(+) contacts are provided by residues 22-27 (EYFVPK) and 54-55 (TW). FAD-binding positions include 54–55 (TW), His84, 114–116 (RGD), 133–134 (YA), Tyr156, Asp171, and Lys178. Substrate is bound at residue Asp116. Substrate-binding residues include Gln189 and Tyr282.

Belongs to the methylenetetrahydrofolate reductase family. It depends on FAD as a cofactor.

The enzyme catalyses (6S)-5-methyl-5,6,7,8-tetrahydrofolate + NADP(+) = (6R)-5,10-methylene-5,6,7,8-tetrahydrofolate + NADPH + H(+). Its pathway is one-carbon metabolism; tetrahydrofolate interconversion. The sequence is that of Methylenetetrahydrofolate reductase 2 (MET13) from Saccharomyces cerevisiae (strain ATCC 204508 / S288c) (Baker's yeast).